Reading from the N-terminus, the 324-residue chain is MPSSSAMAVGALSSSLLVTCCLMVALCSPSIPLEKLAQAPEQPGQEKREHASRDSPGRVSELGRASRDEGSSARDWKSKGSRALSGREAWSKQKQAWAAQGGSAKAADWQVRPRGDTPQGEPPAAAQEAISLELVPTPELPEEYAYPDYRGKGCVDESGFVYAIGEKFAPGPSACPCLCTEEGPLCAQPECPRLHPRCIHVDNSQCCPQCKEKKNYCEFRGKTYQTLEEFVVSPCERCRCEANGEVLCTVSACPQTECVDPVYEPDQCCPICKNGPNCFAETAVIPAGREVKTDECTICHCTYEEGTWRIERQAMCTRHECRQM.

The N-terminal stretch at 1-27 (MPSSSAMAVGALSSSLLVTCCLMVALC) is a signal peptide. The tract at residues 37–126 (AQAPEQPGQE…TPQGEPPAAA (90 aa)) is disordered. Composition is skewed to basic and acidic residues over residues 44–56 (GQEKREHASRDSP) and 64–78 (RASRDEGSSARDWKS). Residues 92-107 (KQKQAWAAQGGSAKAA) show a composition bias toward low complexity. Residues 114–116 (RGD) carry the Mediates cell adhesion motif. 2 consecutive VWFC domains span residues 152-211 (KGCV…PQCK) and 215-273 (NYCE…PICK).

As to quaternary structure, peripherally associated with AMPAR complex. AMPAR complex consists of an inner core made of 4 pore-forming GluA/GRIA proteins (GRIA1, GRIA2, GRIA3 and GRIA4) and 4 major auxiliary subunits arranged in a twofold symmetry. One of the two pairs of distinct binding sites is occupied either by CNIH2, CNIH3 or CACNG2, CACNG3. The other harbors CACNG2, CACNG3, CACNG4, CACNG8 or GSG1L. This inner core of AMPAR complex is complemented by outer core constituents binding directly to the GluA/GRIA proteins at sites distinct from the interaction sites of the inner core constituents. Outer core constituents include at least PRRT1, PRRT2, CKAMP44/SHISA9, FRRS1L and NRN1. The proteins of the inner and outer core serve as a platform for other, more peripherally associated AMPAR constituents, including VWC2. Alone or in combination, these auxiliary subunits control the gating and pharmacology of the AMPAR complex and profoundly impact their biogenesis and protein processing. Predominantly expressed in the brain (at protein level). It is expressed in the neurons but not the glial cells.

It localises to the secreted. Its subcellular location is the extracellular space. The protein resides in the extracellular matrix. It is found in the basement membrane. The protein localises to the synapse. Its function is as follows. BMP antagonist which may play a role in neural development. Promotes cell adhesion. In Mus musculus (Mouse), this protein is Brorin (Vwc2).